The chain runs to 785 residues: Phenylalanine--tRNA ligase beta subunit (785 aa).

Residues 39 to 150 (RTWAAGVVVG…ASLPLGLDVG (112 aa)) enclose the tRNA-binding domain. The B5 domain occupies 400 to 476 (RENRVVSLRP…RVVGYDRFAP (77 aa)). 4 residues coordinate Mg(2+): Asp454, Asp460, Glu463, and Glu464. Positions 692 to 784 (SPFPPAARDL…LAERYSVDLR (93 aa)) constitute an FDX-ACB domain.

The protein belongs to the phenylalanyl-tRNA synthetase beta subunit family. Type 1 subfamily. Tetramer of two alpha and two beta subunits. The cofactor is Mg(2+).

The protein resides in the cytoplasm. It carries out the reaction tRNA(Phe) + L-phenylalanine + ATP = L-phenylalanyl-tRNA(Phe) + AMP + diphosphate + H(+). This Gloeobacter violaceus (strain ATCC 29082 / PCC 7421) protein is Phenylalanine--tRNA ligase beta subunit.